Reading from the N-terminus, the 465-residue chain is GTPase Der (465 aa).

2 consecutive EngA-type G domains span residues 3-166 and 184-358; these read FLVA…LNEY and IHFS…ACAN. Residues 9–16, 56–60, 118–121, 190–197, 237–241, and 302–305 contribute to the GTP site; these read GRANVGKS, DTGGI, NKVD, GRPNVGKS, DTAGV, and NKWD. The KH-like domain occupies 359–443; that stretch reads KKITTADATC…PIVFEFKQSE (85 aa). The disordered stretch occupies residues 446-465; sequence FADRKNKRSKDEGSKSKKVK.

This sequence belongs to the TRAFAC class TrmE-Era-EngA-EngB-Septin-like GTPase superfamily. EngA (Der) GTPase family. Associates with the 50S ribosomal subunit.

GTPase that plays an essential role in the late steps of ribosome biogenesis. This Francisella tularensis subsp. mediasiatica (strain FSC147) protein is GTPase Der.